The primary structure comprises 432 residues: Transcriptional adapter 3-A (432 aa).

Disordered stretches follow at residues 90-127 and 275-314; these read HELGTPIKHSKPKKQKLDGKVSHASGPGPGRPKSRNMQ and SPVEDSPIPEISGKESGTDGASTSPRSQNKPFSAPHTKSL. Polar residues predominate over residues 293-305; sequence DGASTSPRSQNKP. Residues 335 to 398 adopt a coiled-coil conformation; the sequence is ADDSEDEVLA…NEVMDAFRKI (64 aa).

Belongs to the NGG1 family.

Its subcellular location is the nucleus. In terms of biological role, functions as a component of the PCAF complex. The PCAF complex is capable of efficiently acetylating histones in a nucleosomal context. The sequence is that of Transcriptional adapter 3-A (tada3-a) from Xenopus laevis (African clawed frog).